The sequence spans 64 residues: Large ribosomal subunit protein bL35 (64 aa).

The segment covering 1 to 22 (MPKMKSHTGMGKRVRVTGKGKI) has biased composition (basic residues). Residues 1 to 28 (MPKMKSHTGMGKRVRVTGKGKIVKQQAG) are disordered.

It belongs to the bacterial ribosomal protein bL35 family.

The chain is Large ribosomal subunit protein bL35 from Salinispora tropica (strain ATCC BAA-916 / DSM 44818 / JCM 13857 / NBRC 105044 / CNB-440).